A 921-amino-acid chain; its full sequence is MATPSAAFEALMNGVTSWDVPEDAVPCELLLIGEASFPVMVNDMGQVLIAASSYGRGRLVVVSHEDYLVEAQLTPFLLNAVGWLCSSPGAPIGVHPSLAPLAKILEGSGVDAKVEPEVKDSLGVYCIDAYNETMTEKLVKFMKCGGGLLIGGQAWDWANQGEDERVLFTFPGNLVTSVAGIYFTDNKGDTSFFKVSKKMPKIPVLVSCEDDLSDDREELLHGISELDISNSDCFPSQLLVHGALAFPLGLDSYHGCVIAAARYGRGRVVVTGHKVLFTVGKLGPFLLNAVRWLDGGRRGKVVVQTELRTLSGLLAVGGIDTSIEPNLTSDASVYCFEPVSEVGVKELQEFVAEGGGLFVGAQAWWWAFKNPGVSPLARFPGNLLLNPFGISITSQSLNPGPFRTPKAGIRTYHFRSTLAEFQVIMGRKRGNVEKGWLAKLGPDGAAFLQIPAEEIPAYMSVHRLLRKLLSRYRLPVATRENPVINDCCRGAMLSLATGLAHSGSDLSLLVPEIEDMYSSPYLRPSESPITVEVNCTNPGTRYCWMSTGLYIPGRQIIEVSLPEAAASADLKIQIGCHTDDLTRASKLFRGPLVINRCCLDKPTKSITCLWGGLLYIIVPQNSKLGSVPVTVKGAVHAPYYKLGETTLEEWKRRIQENPGPWGELATDNIILTVPTANLRTLENPEPLLRLWDEVMQAVARLGAEPFPLRLPQRIVADVQISVGWMHAGYPIMCHLESVQELINEKLIRTKGLWGPVHELGRNQQRQEWEFPPHTTEATCNLWCVYVHETVLGIPRSRANIALWPPVREKRVRIYLSKGPNVKNWNAWTALETYLQLQEAFGWEPFIRLFTEYRNQTNLPTENVDKMNLWVKMFSHQVQKNLAPFFEAWAWPIQKEVATSLAYLPEWKENIMKLYLLTQMPH.

In terms of domain architecture, Peptidase M60 spans 542-841; the sequence is YCWMSTGLYI…TYLQLQEAFG (300 aa).

The protein belongs to the TCAF family. As to quaternary structure, interacts with TRPM8 (via N-terminus and C-terminus domains); the interaction inhibits TRPM8 channel activity. Interacts with TRPV6. In terms of tissue distribution, isoform 2 is expressed in the prostate and strongly expressed in cancerous prostate samples.

The protein resides in the cell membrane. Functionally, positively regulates the plasma membrane cation channel TRPM8 activity. Involved in the recruitment of TRPM8 to the cell surface. Promotes prostate cancer cell migration inhibition in a TRPM8-dependent manner. The chain is TRPM8 channel-associated factor 1 from Homo sapiens (Human).